A 308-amino-acid chain; its full sequence is Barttin (308 aa).

Over 1–5 the chain is Cytoplasmic; sequence MADEK. The interval 1–72 is regulates channel membrane trafficking and anion conductance; it reads MADEKTFRIG…VPADSDFQGM (72 aa). A helical transmembrane segment spans residues 6 to 26; it reads TFRIGFIVLGLFLLSLGTFLM. Topologically, residues 27-32 are extracellular; that stretch reads SHDRPQ. Residues 33 to 53 form a helical membrane-spanning segment; the sequence is VYGTFYAMGSIMVIGGVLWSM. Residues cysteine 54 and cysteine 56 are each lipidated (S-palmitoyl cysteine). The Cytoplasmic segment spans residues 54–308; it reads CQCYPKITFV…ELGFEPDVQG (255 aa). 2 positions are modified to phosphoserine: serine 79 and serine 107. Disordered stretches follow at residues 127–149 and 162–308; these read PLLAPELKTGTSSAKEGEPHSAQ and LDEK…DVQG. The segment covering 162–171 has biased composition (basic and acidic residues); sequence LDEKEGEKSR. Polar residues predominate over residues 172-183; that stretch reads SQSSPPACSQGS. Positions 274-283 are enriched in acidic residues; sequence EEPEQEEEDL. Serine 290 is subject to Phosphoserine.

In terms of assembly, interacts with CLCNK channels. Forms heteromers with CLCNKA in the thin ascending limb of Henle and with CLCNKB in the thick ascending limb and more distal segments. Palmitoylation is necessary for activation of plasma membrane-inserted CLC-K/barttin channels. As to expression, expressed along the distal nephron.

It localises to the basolateral cell membrane. Regulatory subunit of anion-selective CLCNKA:BSND and CLCNKB:BSND heteromeric channels involved in basolateral chloride conductance along the nephron to achieve urine concentration and maintain systemic acid-base homeostasis, and in the stria vascularis of the inner ear to establish the endocochlear potential necessary for normal hearing. Most likely acts as a chaperone that allosterically regulates proper sorting of CLCNKA:BSND and CLCNKB:BSND channels at the basolateral plasma membrane domain and functional switch to ion conducting state. Mediates constitutive opening of channel common gates. In Rattus norvegicus (Rat), this protein is Barttin.